A 717-amino-acid chain; its full sequence is Photosystem I P700 chlorophyll a apoprotein A1 (717 aa).

Helical transmembrane passes span 59–82 (VFRA…FHGA), 145–168 (LYCT…FHYH), 184–208 (LNHH…HVSL), 280–298 (TAHH…GHMY), 335–358 (WHAQ…HHMY), 374–400 (LSLF…IFMV), 422–444 (AIVS…LYIH), and 520–538 (FLVH…LILL). Residues Cys562 and Cys571 each coordinate [4Fe-4S] cluster. The next 2 helical transmembrane spans lie at 578–599 (HVFL…HFSW) and 653–675 (LSAY…MFLF). His664 serves as a coordination point for chlorophyll a'. Residues Met672 and Tyr680 each contribute to the chlorophyll a site. Trp681 contributes to the phylloquinone binding site. Residues 713 to 717 (AVGVA) traverse the membrane as a helical segment.

It belongs to the PsaA/PsaB family. As to quaternary structure, the PsaA/B heterodimer binds the P700 chlorophyll special pair and subsequent electron acceptors. PSI consists of a core antenna complex that captures photons, and an electron transfer chain that converts photonic excitation into a charge separation. The eukaryotic PSI reaction center is composed of at least 11 subunits. The cofactor is P700 is a chlorophyll a/chlorophyll a' dimer, A0 is one or more chlorophyll a, A1 is one or both phylloquinones and FX is a shared 4Fe-4S iron-sulfur center..

It localises to the plastid. It is found in the chloroplast thylakoid membrane. The enzyme catalyses reduced [plastocyanin] + hnu + oxidized [2Fe-2S]-[ferredoxin] = oxidized [plastocyanin] + reduced [2Fe-2S]-[ferredoxin]. In terms of biological role, psaA and PsaB bind P700, the primary electron donor of photosystem I (PSI), as well as the electron acceptors A0, A1 and FX. PSI is a plastocyanin-ferredoxin oxidoreductase, converting photonic excitation into a charge separation, which transfers an electron from the donor P700 chlorophyll pair to the spectroscopically characterized acceptors A0, A1, FX, FA and FB in turn. Oxidized P700 is reduced on the lumenal side of the thylakoid membrane by plastocyanin. In Cycas revoluta (Sago palm), this protein is Photosystem I P700 chlorophyll a apoprotein A1.